A 275-amino-acid polypeptide reads, in one-letter code: 2,3,4,5-tetrahydropyridine-2,6-dicarboxylate N-succinyltransferase (275 aa).

The protein belongs to the transferase hexapeptide repeat family.

The protein resides in the cytoplasm. The catalysed reaction is (S)-2,3,4,5-tetrahydrodipicolinate + succinyl-CoA + H2O = (S)-2-succinylamino-6-oxoheptanedioate + CoA. Its pathway is amino-acid biosynthesis; L-lysine biosynthesis via DAP pathway; LL-2,6-diaminopimelate from (S)-tetrahydrodipicolinate (succinylase route): step 1/3. The chain is 2,3,4,5-tetrahydropyridine-2,6-dicarboxylate N-succinyltransferase from Burkholderia multivorans (strain ATCC 17616 / 249).